The primary structure comprises 245 residues: tRNA (guanine-N(7)-)-methyltransferase (245 aa).

Residues G70, 93 to 94, 126 to 127, and L146 contribute to the S-adenosyl-L-methionine site; these read EI and NA. The active site involves D149. 224-226 is an S-adenosyl-L-methionine binding site; that stretch reads SEE.

This sequence belongs to the class I-like SAM-binding methyltransferase superfamily. TrmB family.

It localises to the nucleus. The catalysed reaction is guanosine(46) in tRNA + S-adenosyl-L-methionine = N(7)-methylguanosine(46) in tRNA + S-adenosyl-L-homocysteine. Its pathway is tRNA modification; N(7)-methylguanine-tRNA biosynthesis. Catalyzes the formation of N(7)-methylguanine at position 46 (m7G46) in tRNA. This is tRNA (guanine-N(7)-)-methyltransferase from Aedes aegypti (Yellowfever mosquito).